We begin with the raw amino-acid sequence, 105 residues long: uncharacterized protein (105 aa).

Residues 80–105 (TGGPTSSTCTRRSDLATGRGSDRRPD) form a disordered region.

This is an uncharacterized protein from Micromonospora rosea.